The primary structure comprises 175 residues: 3-hydroxyanthranilate 3,4-dioxygenase (175 aa).

Residue Arg45 participates in O2 binding. Fe cation is bound by residues His49, Glu55, and His93. Glu55 serves as a coordination point for substrate. Residues Arg97 and Glu107 each contribute to the substrate site. Residues Cys122, Cys125, Cys159, and Cys162 each contribute to the a divalent metal cation site.

This sequence belongs to the 3-HAO family. The cofactor is Fe(2+).

Its subcellular location is the cytoplasm. It catalyses the reaction 3-hydroxyanthranilate + O2 = (2Z,4Z)-2-amino-3-carboxymuconate 6-semialdehyde. It functions in the pathway cofactor biosynthesis; NAD(+) biosynthesis; quinolinate from L-kynurenine: step 3/3. In terms of biological role, catalyzes the oxidative ring opening of 3-hydroxyanthranilate to 2-amino-3-carboxymuconate semialdehyde, which spontaneously cyclizes to quinolinate. The protein is 3-hydroxyanthranilate 3,4-dioxygenase of Lodderomyces elongisporus (strain ATCC 11503 / CBS 2605 / JCM 1781 / NBRC 1676 / NRRL YB-4239) (Yeast).